Here is a 339-residue protein sequence, read N- to C-terminus: DNA-directed RNA polymerase subunit alpha (339 aa).

Positions 1–233 (MVREEVAGST…DLFLPFLHAE (233 aa)) are alpha N-terminal domain (alpha-NTD). The tract at residues 266 to 339 (GIPLNCIFID…IDLLKNKLSF (74 aa)) is alpha C-terminal domain (alpha-CTD).

It belongs to the RNA polymerase alpha chain family. In terms of assembly, in plastids the minimal PEP RNA polymerase catalytic core is composed of four subunits: alpha, beta, beta', and beta''. When a (nuclear-encoded) sigma factor is associated with the core the holoenzyme is formed, which can initiate transcription.

The protein resides in the plastid. It is found in the chloroplast. It catalyses the reaction RNA(n) + a ribonucleoside 5'-triphosphate = RNA(n+1) + diphosphate. Its function is as follows. DNA-dependent RNA polymerase catalyzes the transcription of DNA into RNA using the four ribonucleoside triphosphates as substrates. In Aegilops speltoides (Goatgrass), this protein is DNA-directed RNA polymerase subunit alpha.